Reading from the N-terminus, the 251-residue chain is MALPEFSMRQLLEAGVHYGHQTARWNPKMAEFIYGDRNGIHIVDLTQTVPMLDQALKVVRDTVAKGGRILFVGTKRQAQKPIAEAAEKCAQHYMNHRWLGGTLTNWKTVSQSIQRLKQLDEVLATGAEGLTKKERLNMEREQQKLQASLGGIREMGGTPDLLFIIDVGKEDLAIAEAQKLGIPVVAVVDTNNSPKGVDYVIPGNDDAARAIALYCDLVSRAALDGMSAQMGAAGIDLGALDVAPEEETLEA.

Belongs to the universal ribosomal protein uS2 family.

This chain is Small ribosomal subunit protein uS2, found in Cereibacter sphaeroides (strain ATCC 17029 / ATH 2.4.9) (Rhodobacter sphaeroides).